The sequence spans 506 residues: Cobyric acid synthase (506 aa).

The GATase cobBQ-type domain maps to 251–448 (DITIAIVQLP…LHGLFDSDAF (198 aa)). The active-site Nucleophile is Cys-332. Residue His-440 is part of the active site.

The protein belongs to the CobB/CobQ family. CobQ subfamily.

Its pathway is cofactor biosynthesis; adenosylcobalamin biosynthesis. Its function is as follows. Catalyzes amidations at positions B, D, E, and G on adenosylcobyrinic A,C-diamide. NH(2) groups are provided by glutamine, and one molecule of ATP is hydrogenolyzed for each amidation. This Salmonella dublin (strain CT_02021853) protein is Cobyric acid synthase.